The chain runs to 582 residues: UPF0329 protein ECU07_0070 (582 aa).

The disordered stretch occupies residues 326–386; sequence EEKAKSKKKG…KTGKKSKGDQ (61 aa). Basic residues predominate over residues 330–339; the sequence is KSKKKGKKKS. Positions 344-354 are enriched in basic and acidic residues; it reads EAKEEEKKESG.

The protein belongs to the UPF0329 family.

The polypeptide is UPF0329 protein ECU07_0070 (Encephalitozoon cuniculi (strain GB-M1) (Microsporidian parasite)).